The following is a 343-amino-acid chain: Tetraacyldisaccharide 4'-kinase (343 aa).

Residue 51–58 (HGGGAGKT) participates in ATP binding.

The protein belongs to the LpxK family.

The enzyme catalyses a lipid A disaccharide + ATP = a lipid IVA + ADP + H(+). The protein operates within glycolipid biosynthesis; lipid IV(A) biosynthesis; lipid IV(A) from (3R)-3-hydroxytetradecanoyl-[acyl-carrier-protein] and UDP-N-acetyl-alpha-D-glucosamine: step 6/6. In terms of biological role, transfers the gamma-phosphate of ATP to the 4'-position of a tetraacyldisaccharide 1-phosphate intermediate (termed DS-1-P) to form tetraacyldisaccharide 1,4'-bis-phosphate (lipid IVA). This chain is Tetraacyldisaccharide 4'-kinase, found in Rhodopseudomonas palustris (strain BisB18).